Here is a 90-residue protein sequence, read N- to C-terminus: Large ribosomal subunit protein bL27 (90 aa).

The disordered stretch occupies residues 1–24 (MAHKKGTGSTRNGRDSNSKRLGVK).

This sequence belongs to the bacterial ribosomal protein bL27 family.

This is Large ribosomal subunit protein bL27 from Prochlorococcus marinus (strain NATL1A).